A 311-amino-acid polypeptide reads, in one-letter code: S-adenosyl-L-methionine-dependent tRNA 4-demethylwyosine synthase (311 aa).

The [4Fe-4S] cluster site is built by C26, C39, C52, C62, C66, and C69. The Radical SAM core domain occupies 45–283 (YGIETHRCIQ…LKLAKMLDEN (239 aa)).

This sequence belongs to the TYW1 family. In terms of assembly, monomer. It depends on [4Fe-4S] cluster as a cofactor.

It localises to the cytoplasm. It catalyses the reaction N(1)-methylguanosine(37) in tRNA(Phe) + pyruvate + S-adenosyl-L-methionine = 4-demethylwyosine(37) in tRNA(Phe) + 5'-deoxyadenosine + L-methionine + CO2 + H2O. Component of the wyosine derivatives biosynthesis pathway that catalyzes the condensation of N-methylguanine with 2 carbon atoms from pyruvate to form the tricyclic 4-demethylwyosine (imG-14) on guanosine-37 of tRNA(Phe). The chain is S-adenosyl-L-methionine-dependent tRNA 4-demethylwyosine synthase from Methanocaldococcus jannaschii (strain ATCC 43067 / DSM 2661 / JAL-1 / JCM 10045 / NBRC 100440) (Methanococcus jannaschii).